A 164-amino-acid chain; its full sequence is tRNA (cytidine(34)-2'-O)-methyltransferase (164 aa).

Positions 80, 102, 124, and 132 each coordinate S-adenosyl-L-methionine.

Belongs to the class IV-like SAM-binding methyltransferase superfamily. RNA methyltransferase TrmH family. TrmL subfamily. Homodimer.

The protein resides in the cytoplasm. It catalyses the reaction cytidine(34) in tRNA + S-adenosyl-L-methionine = 2'-O-methylcytidine(34) in tRNA + S-adenosyl-L-homocysteine + H(+). The enzyme catalyses 5-carboxymethylaminomethyluridine(34) in tRNA(Leu) + S-adenosyl-L-methionine = 5-carboxymethylaminomethyl-2'-O-methyluridine(34) in tRNA(Leu) + S-adenosyl-L-homocysteine + H(+). Its function is as follows. Methylates the ribose at the nucleotide 34 wobble position in the two leucyl isoacceptors tRNA(Leu)(CmAA) and tRNA(Leu)(cmnm5UmAA). Catalyzes the methyl transfer from S-adenosyl-L-methionine to the 2'-OH of the wobble nucleotide. The protein is tRNA (cytidine(34)-2'-O)-methyltransferase of Polaromonas sp. (strain JS666 / ATCC BAA-500).